Consider the following 298-residue polypeptide: NAD kinase (298 aa).

Asp-80 (proton acceptor) is an active-site residue. NAD(+) contacts are provided by residues 80 to 81, 154 to 155, Arg-182, Asp-184, 195 to 200, Ala-219, and Gln-253; these read DG, ND, and TAYALS.

Belongs to the NAD kinase family. A divalent metal cation serves as cofactor.

It localises to the cytoplasm. The enzyme catalyses NAD(+) + ATP = ADP + NADP(+) + H(+). Involved in the regulation of the intracellular balance of NAD and NADP, and is a key enzyme in the biosynthesis of NADP. Catalyzes specifically the phosphorylation on 2'-hydroxyl of the adenosine moiety of NAD to yield NADP. This Paracidovorax citrulli (strain AAC00-1) (Acidovorax citrulli) protein is NAD kinase.